Here is a 79-residue protein sequence, read N- to C-terminus: Scutelatoxin (79 aa).

A signal peptide spans 1 to 21 (MKTLLLTLVVMTIMCLDLGYT). 4 cysteine pairs are disulfide-bonded: Cys-24/Cys-41, Cys-34/Cys-59, Cys-63/Cys-71, and Cys-72/Cys-77.

The protein belongs to the three-finger toxin family. Short-chain subfamily. In terms of tissue distribution, expressed by the venom gland.

Its subcellular location is the secreted. The protein is Scutelatoxin of Oxyuranus scutellatus scutellatus (Australian taipan).